The chain runs to 476 residues: RuvB-like helicase 2 (476 aa).

Residue 76-83 (GPPSTGKT) participates in ATP binding.

It belongs to the RuvB family. In terms of assembly, may form heterododecamers with RVB1. Component of the SWR1 chromatin remodeling complex, the INO80 chromatin remodeling complex, and of the R2TP complex.

The protein localises to the nucleus. The catalysed reaction is ATP + H2O = ADP + phosphate + H(+). Functionally, DNA helicase which participates in several chromatin remodeling complexes, including the SWR1 and the INO80 complexes. The SWR1 complex mediates the ATP-dependent exchange of histone H2A for the H2A variant HZT1 leading to transcriptional regulation of selected genes by chromatin remodeling. The INO80 complex remodels chromatin by shifting nucleosomes and is involved in DNA repair. Also involved in pre-rRNA processing. This is RuvB-like helicase 2 (RVB2) from Candida glabrata (strain ATCC 2001 / BCRC 20586 / JCM 3761 / NBRC 0622 / NRRL Y-65 / CBS 138) (Yeast).